A 310-amino-acid chain; its full sequence is 3,5-dioxohexanoate:acetyl-CoA acetone transferase (310 aa).

Residues H49, H51, and E258 each coordinate Zn(2+).

It belongs to the BKACE family. It depends on Zn(2+) as a cofactor.

The enzyme catalyses 3,5-dioxohexanoate + acetyl-CoA = acetoacetyl-CoA + acetoacetate. In terms of biological role, catalyzes the condensation of 3,5-dioxohexanoate and acetyl-CoA, forming acetoacetate and acetoacetyl-CoA. May be involved in fatty acid biosynthesis rescue via triacetic acid lactone. This chain is 3,5-dioxohexanoate:acetyl-CoA acetone transferase, found in Paraburkholderia graminis (strain ATCC 700544 / DSM 17151 / LMG 18924 / NCIMB 13744 / C4D1M).